The chain runs to 284 residues: Bifunctional protein FolD (284 aa).

NADP(+) contacts are provided by residues 166–168 and Ile232; that span reads GAS.

It belongs to the tetrahydrofolate dehydrogenase/cyclohydrolase family. In terms of assembly, homodimer.

It catalyses the reaction (6R)-5,10-methylene-5,6,7,8-tetrahydrofolate + NADP(+) = (6R)-5,10-methenyltetrahydrofolate + NADPH. The enzyme catalyses (6R)-5,10-methenyltetrahydrofolate + H2O = (6R)-10-formyltetrahydrofolate + H(+). Its pathway is one-carbon metabolism; tetrahydrofolate interconversion. Functionally, catalyzes the oxidation of 5,10-methylenetetrahydrofolate to 5,10-methenyltetrahydrofolate and then the hydrolysis of 5,10-methenyltetrahydrofolate to 10-formyltetrahydrofolate. The chain is Bifunctional protein FolD from Pseudomonas putida (strain W619).